A 131-amino-acid polypeptide reads, in one-letter code: Fumarate reductase subunit C (131 aa).

A run of 3 helical transmembrane segments spans residues 30 to 50, 63 to 83, and 109 to 129; these read EGTA…LFAL, FLQN…ALLH, and IIKS…FVAL.

This sequence belongs to the FrdC family. As to quaternary structure, part of an enzyme complex containing four subunits: a flavoprotein (FrdA), an iron-sulfur protein (FrdB), and two hydrophobic anchor proteins (FrdC and FrdD).

The protein localises to the cell inner membrane. Two distinct, membrane-bound, FAD-containing enzymes are responsible for the catalysis of fumarate and succinate interconversion; fumarate reductase is used in anaerobic growth, and succinate dehydrogenase is used in aerobic growth. Anchors the catalytic components of the fumarate reductase complex to the cell inner membrane, binds quinones. This Shigella dysenteriae serotype 1 (strain Sd197) protein is Fumarate reductase subunit C.